The following is a 356-amino-acid chain: MSRRHRTFPVKVGSVTIGGTAPVTIQSMTNTDTKDTEKTLAQIKDLVEAGCQLVRVAIPDEESVNSFKTLTQFSPVPLIADIHFSYQLAIKAIEAGASKIRINPGNIGSRQRVAKVVEKAKTHNVPIRVGINSGSVEKNLLQKYGGPTPSALVESAVNNVMMLSEMGFGDVVVSIKASDVNTTVKANQEFATRLPNPLHLGITEAGTIKQGTIKSSVGIGTLLSHGIGDTLRVSLSGSPIEEVSVARGILSSLNLAEGPRIVSCPTCARSNISVEDLASTVEDRLKDLNTSLTVAVMGCEVNGPGEAKEADIGIAGSKEYGVLFKKGKIIDRVPKNQLLEVLSRAIDEYIDEIHSK.

[4Fe-4S] cluster-binding residues include C264, C267, C299, and E306.

It belongs to the IspG family. The cofactor is [4Fe-4S] cluster.

The enzyme catalyses (2E)-4-hydroxy-3-methylbut-2-enyl diphosphate + oxidized [flavodoxin] + H2O + 2 H(+) = 2-C-methyl-D-erythritol 2,4-cyclic diphosphate + reduced [flavodoxin]. The protein operates within isoprenoid biosynthesis; isopentenyl diphosphate biosynthesis via DXP pathway; isopentenyl diphosphate from 1-deoxy-D-xylulose 5-phosphate: step 5/6. Its function is as follows. Converts 2C-methyl-D-erythritol 2,4-cyclodiphosphate (ME-2,4cPP) into 1-hydroxy-2-methyl-2-(E)-butenyl 4-diphosphate. This is 4-hydroxy-3-methylbut-2-en-1-yl diphosphate synthase (flavodoxin) from Natranaerobius thermophilus (strain ATCC BAA-1301 / DSM 18059 / JW/NM-WN-LF).